The following is a 267-amino-acid chain: Shikimate dehydrogenase (NADP(+)) (267 aa).

Shikimate contacts are provided by residues 14 to 16 (SLS) and Thr61. Residue Lys65 is the Proton acceptor of the active site. Shikimate-binding residues include Asn86 and Asp101. NADP(+)-binding positions include 126-130 (GAGGA), 150-155 (NRTPFK), and Leu213. Tyr215 contacts shikimate. NADP(+) is bound at residue Gly236.

This sequence belongs to the shikimate dehydrogenase family. In terms of assembly, homodimer.

It catalyses the reaction shikimate + NADP(+) = 3-dehydroshikimate + NADPH + H(+). It participates in metabolic intermediate biosynthesis; chorismate biosynthesis; chorismate from D-erythrose 4-phosphate and phosphoenolpyruvate: step 4/7. Its function is as follows. Involved in the biosynthesis of the chorismate, which leads to the biosynthesis of aromatic amino acids. Catalyzes the reversible NADPH linked reduction of 3-dehydroshikimate (DHSA) to yield shikimate (SA). This chain is Shikimate dehydrogenase (NADP(+)), found in Ruthia magnifica subsp. Calyptogena magnifica.